A 561-amino-acid chain; its full sequence is MTANTGEPYKRHSNESPVDRNINVNAIQSDKFLSLLLSMVPVVCQTGQEERLKKVNGLTPIGYGFNIRTDQHLEFHNLSEPNYLGNGLHCSSLCSTNYDFDGYDYCDGINASETDAMLQDSRSSADGDKDALVEGSKKQTKESSIAMALQILVPFLLAGFGTVSAGMVLDIVQHWDVFKNLTEVFILVPALLGLKGNLEMTLASRLSTAVNVGKMDSPIEKWNLIIGNLALKQVQATVVGFLAAVFAVILGWIPDGKYQLDHAILLCSSSVATAFIASLLQGIIMVGVIVGSKKTGINPDNVATPIAASFGDLITLAILAWISQGLYNCLGSYAFVSPLVGVFFLAMTPIWIVIASKHPATRTVLHSGWEPVITAMLISSIGGLILDTTVSDPNLVGIVVYTPVINGIGGNLVAIQASRISTYLHLYSIPGELPEDAKGCYHPCRTFCGTGVNNKSAQVLLSLVIPGHLIFLYTIYLMKSGHTSLTPIFVAVYLLAALLQVFALLWIADWMVHHIWRKGKDPDSFSIPYLTALGDLLGTALLAISFHILWIIGDRDGDVGD.

Residues 1 to 150 (MTANTGEPYK…KESSIAMALQ (150 aa)) lie on the Extracellular side of the membrane. A helical transmembrane segment spans residues 151–171 (ILVPFLLAGFGTVSAGMVLDI). Residues 172–183 (VQHWDVFKNLTE) lie on the Cytoplasmic side of the membrane. The helical transmembrane segment at 184 to 204 (VFILVPALLGLKGNLEMTLAS) threads the bilayer. Topologically, residues 205-233 (RLSTAVNVGKMDSPIEKWNLIIGNLALKQ) are extracellular. Residues 234-254 (VQATVVGFLAAVFAVILGWIP) traverse the membrane as a helical segment. Residues 255–270 (DGKYQLDHAILLCSSS) lie on the Cytoplasmic side of the membrane. Residues 271–291 (VATAFIASLLQGIIMVGVIVG) traverse the membrane as a helical segment. Residues 292-301 (SKKTGINPDN) lie on the Extracellular side of the membrane. Residues 302–322 (VATPIAASFGDLITLAILAWI) traverse the membrane as a helical segment. Residues 323 to 333 (SQGLYNCLGSY) lie on the Cytoplasmic side of the membrane. A helical membrane pass occupies residues 334–354 (AFVSPLVGVFFLAMTPIWIVI). At 355–364 (ASKHPATRTV) the chain is on the extracellular side. Residues 365-385 (LHSGWEPVITAMLISSIGGLI) form a helical membrane-spanning segment. The Cytoplasmic segment spans residues 386-394 (LDTTVSDPN). Residues 395–415 (LVGIVVYTPVINGIGGNLVAI) traverse the membrane as a helical segment. Topologically, residues 416 to 457 (QASRISTYLHLYSIPGELPEDAKGCYHPCRTFCGTGVNNKSA) are extracellular. Residues 458 to 478 (QVLLSLVIPGHLIFLYTIYLM) traverse the membrane as a helical segment. At 479 to 487 (KSGHTSLTP) the chain is on the cytoplasmic side. A helical membrane pass occupies residues 488–508 (IFVAVYLLAALLQVFALLWIA). The Extracellular portion of the chain corresponds to 509–531 (DWMVHHIWRKGKDPDSFSIPYLT). The chain crosses the membrane as a helical span at residues 532–552 (ALGDLLGTALLAISFHILWII). Over 553 to 561 (GDRDGDVGD) the chain is Cytoplasmic.

It belongs to the SLC41A transporter family.

It localises to the cell membrane. It carries out the reaction Mg(2+)(in) = Mg(2+)(out). The catalysed reaction is Mn(2+)(in) = Mn(2+)(out). The enzyme catalyses Co(2+)(in) = Co(2+)(out). It catalyses the reaction Ni(2+)(in) = Ni(2+)(out). It carries out the reaction Fe(2+)(in) = Fe(2+)(out). Acts as a plasma-membrane magnesium transporter. Can also mediate the transport of other divalent metal cations in an order of Ba(2+) &gt; Ni(2+) &gt; Co(2+) &gt; Fe(2+) &gt; Mn(2+). The sequence is that of Solute carrier family 41 member 2 (slc41a2) from Xenopus laevis (African clawed frog).